Reading from the N-terminus, the 250-residue chain is MKIGVFDSGVGGLSVLKSLYEARLFDEIIYYGDTARVPYGVKDKDTIIKFCLEALDFFEQFQIDMLIIACNTASAYALDALRAKAHFPVYGVIDAGVEATIKALHDKNKEILVIATKATIKSEEYQKRLLSQGYTNINALATGLFVPMVEEGIFEGDFLQSAMEYYFKNITTPDALILACTHFPLLGRSLSKYFGDKTKLIHSGDAIVEFLKERENIDLKNHKAKLHFYASSDVESLKNTAKIWLNLLRK.

Substrate is bound by residues 7-8 and 39-40; these read DS and YG. The Proton donor/acceptor role is filled by Cys70. 71 to 72 contacts substrate; the sequence is NT. Cys180 (proton donor/acceptor) is an active-site residue. 181 to 182 is a binding site for substrate; it reads TH.

This sequence belongs to the aspartate/glutamate racemases family.

The catalysed reaction is L-glutamate = D-glutamate. The protein operates within cell wall biogenesis; peptidoglycan biosynthesis. In terms of biological role, provides the (R)-glutamate required for cell wall biosynthesis. The chain is Glutamate racemase from Campylobacter jejuni subsp. jejuni serotype O:2 (strain ATCC 700819 / NCTC 11168).